The primary structure comprises 617 residues: pH-sensitive chloride channel 2 (617 aa).

A signal peptide spans 1–28 (MHSPGAAAYVFLQCLVALVAAVIAQSGA). Topologically, residues 29 to 387 (DQPPTTVVEV…VHLAREMGFY (359 aa)) are extracellular. A glycan (N-linked (GlcNAc...) asparagine) is linked at Asn-57. Over residues 82-96 (TVSVDSSSTTTVAST) the composition is skewed to low complexity. The segment at 82 to 110 (TVSVDSSSTTTVASTQEPTSTTERTMSPE) is disordered. Residues 97 to 106 (QEPTSTTERT) are compositionally biased toward polar residues. The N-linked (GlcNAc...) asparagine glycan is linked to Asn-130. The span at 131–147 (ATDDNRPDAKSSGKDSE) shows a compositional bias: basic and acidic residues. Residues 131 to 155 (ATDDNRPDAKSSGKDSECPTLEGAD) form a disordered region. Residues Asn-184, Asn-234, Asn-351, and Asn-370 are each glycosylated (N-linked (GlcNAc...) asparagine). Residues 388 to 408 (MMDYFIPSIMLVAISWVTFWL) traverse the membrane as a helical segment. Residues 409–414 (QADQSA) are Cytoplasmic-facing. A helical transmembrane segment spans residues 415-434 (PRITLGTSTMLTFITLASAQ). At 435–447 (GKTLPKVSYIKAS) the chain is on the extracellular side. The helical transmembrane segment at 448–468 (EIWFLGCTGFIFGSLVEFAFV) threads the bilayer. The Cytoplasmic segment spans residues 469–596 (NTIWRRKRNV…VAIWIDKRSR (128 aa)). The helical transmembrane segment at 597-617 (FVFPIAFVIFNIFYWTFVYYV) threads the bilayer.

Belongs to the ligand-gated ion channel (TC 1.A.9) family.

Its subcellular location is the cell membrane. It carries out the reaction chloride(in) = chloride(out). Ligand and pH-gated channel that mediates chloride transport in the mid-gut and thereby may function in larval metabolism and fluid homeostasis. Channel opening is triggered by zinc binding or, to a lesser extent, an increase in extracellular pH. This is pH-sensitive chloride channel 2 from Anopheles gambiae (African malaria mosquito).